Consider the following 401-residue polypeptide: Lipoyl synthase 1, mitochondrial (401 aa).

The transit peptide at 1-25 (MWSSSSSLCRNPSFRRAWLSTVTVT) directs the protein to the mitochondrion. The tract at residues 49–79 (IDDFSSTNAPTTTTHYTSSNGSPIVRQKAAP) is disordered. Residues 51–70 (DFSSTNAPTTTTHYTSSNGS) show a composition bias toward polar residues. Residues C117, C122, C128, C148, C152, C155, and S376 each coordinate [4Fe-4S] cluster. The Radical SAM core domain maps to 133-365 (EDQTATATIM…QETAMGMGFA (233 aa)).

This sequence belongs to the radical SAM superfamily. Lipoyl synthase family. The cofactor is [4Fe-4S] cluster.

Its subcellular location is the mitochondrion. The catalysed reaction is [[Fe-S] cluster scaffold protein carrying a second [4Fe-4S](2+) cluster] + N(6)-octanoyl-L-lysyl-[protein] + 2 oxidized [2Fe-2S]-[ferredoxin] + 2 S-adenosyl-L-methionine + 4 H(+) = [[Fe-S] cluster scaffold protein] + N(6)-[(R)-dihydrolipoyl]-L-lysyl-[protein] + 4 Fe(3+) + 2 hydrogen sulfide + 2 5'-deoxyadenosine + 2 L-methionine + 2 reduced [2Fe-2S]-[ferredoxin]. Its pathway is protein modification; protein lipoylation via endogenous pathway; protein N(6)-(lipoyl)lysine from octanoyl-[acyl-carrier-protein]: step 2/2. In terms of biological role, catalyzes the radical-mediated insertion of two sulfur atoms into the C-6 and C-8 positions of the octanoyl moiety bound to the lipoyl domains of lipoate-dependent enzymes, thereby converting the octanoylated domains into lipoylated derivatives. The polypeptide is Lipoyl synthase 1, mitochondrial (Phaeodactylum tricornutum (strain CCAP 1055/1)).